Consider the following 154-residue polypeptide: Histidine-containing phosphotransfer protein 1 (154 aa).

Met-1 carries the post-translational modification N-acetylmethionine. In terms of domain architecture, HPt spans 38–143 (NPDFVSQVVT…FKLEQQIVAS (106 aa)). The residue at position 79 (His-79) is a Phosphohistidine.

In terms of assembly, interacts with the B-type response regulators ARR1, ARR2, ARR4 and ARR9. Binds to ETR1, AHK2, AHK3, AHK4, AHK5 and FBR12. In terms of processing, two-component system major event consists of a His-to-Asp phosphorelay between a sensor histidine kinase (HK) and a response regulator (RR). In plants, the His-to-Asp phosphorelay involves an additional intermediate named Histidine-containing phosphotransfer protein (HPt). This multistep phosphorelay consists of a His-Asp-His-Asp sequential transfer of a phosphate group between first a His and an Asp of the HK protein, followed by the transfer to a conserved His of the HPt protein and finally the transfer to an Asp in the receiver domain of the RR protein. Strongly expressed in roots.

The protein localises to the cytoplasm. It localises to the cytosol. It is found in the nucleus. Its function is as follows. Functions as a two-component phosphorelay mediators between cytokinin sensor histidine kinases and response regulator (B-type ARRs). Plays an important role in propagating cytokinin signal transduction through the multistep His-to-Asp phosphorelay. The polypeptide is Histidine-containing phosphotransfer protein 1 (AHP1) (Arabidopsis thaliana (Mouse-ear cress)).